Here is a 181-residue protein sequence, read N- to C-terminus: Malignant T-cell-amplified sequence 1 (181 aa).

A Phosphothreonine; by MAPK1 and MAPK3 modification is found at threonine 81. The PUA domain maps to 92 to 171 (LPHQQVDKGA…IGIENIHYLN (80 aa)). At serine 118 the chain carries Phosphoserine; by CDK1.

Belongs to the MCTS1 family. As to quaternary structure, interacts (via PUA domain) with DENR; the complex regulates translation reinitiation. Phosphorylation is critical for stabilization and promotion of cell proliferation. In terms of tissue distribution, ubiquitous. Over-expressed in T-cell lymphoid cell lines and in non-Hodgkin lymphoma cell lines as well as in a subset of primary large B-cell lymphomas.

It localises to the cytoplasm. Functionally, translation regulator forming a complex with DENR to promote translation reinitiation. Translation reinitiation is the process where the small ribosomal subunit remains attached to the mRNA following termination of translation of a regulatory upstream ORF (uORF), and resume scanning on the same mRNA molecule to initiate translation of a downstream ORF, usually the main ORF (mORF). The MCTS1/DENR complex is pivotal to two linked mechanisms essential for translation reinitiation. Firstly, the dissociation of deacylated tRNAs from post-termination 40S ribosomal complexes during ribosome recycling. Secondly, the recruitment in an EIF2-independent manner of aminoacylated initiator tRNA to P site of 40S ribosomes for a new round of translation. This regulatory mechanism governs the translation of more than 150 genes which translation reinitiation is MCTS1/DENR complex-dependent. Consequently, modulates various unrelated biological processes including cell cycle regulation and DNA damage signaling and repair. Notably, it positively regulates interferon gamma immunity to mycobacteria by enhancing the translation of JAK2. The sequence is that of Malignant T-cell-amplified sequence 1 (MCTS1) from Homo sapiens (Human).